The following is a 497-amino-acid chain: Glycerol kinase (497 aa).

Threonine 12 is an ADP binding site. Residues threonine 12, threonine 13, and serine 14 each coordinate ATP. Threonine 12 is a binding site for sn-glycerol 3-phosphate. Arginine 16 is a binding site for ADP. Residues arginine 82, glutamate 83, tyrosine 134, and aspartate 243 each contribute to the sn-glycerol 3-phosphate site. Residues arginine 82, glutamate 83, tyrosine 134, aspartate 243, and glutamine 244 each coordinate glycerol. 2 residues coordinate ADP: threonine 265 and glycine 308. ATP is bound by residues threonine 265, glycine 308, glutamine 312, and glycine 409. 2 residues coordinate ADP: glycine 409 and asparagine 413.

This sequence belongs to the FGGY kinase family. Homotetramer and homodimer (in equilibrium).

The catalysed reaction is glycerol + ATP = sn-glycerol 3-phosphate + ADP + H(+). Its pathway is polyol metabolism; glycerol degradation via glycerol kinase pathway; sn-glycerol 3-phosphate from glycerol: step 1/1. With respect to regulation, activated by phosphorylation and inhibited by fructose 1,6-bisphosphate (FBP). Key enzyme in the regulation of glycerol uptake and metabolism. Catalyzes the phosphorylation of glycerol to yield sn-glycerol 3-phosphate. This chain is Glycerol kinase, found in Thermoanaerobacter sp. (strain X514).